The following is a 200-amino-acid chain: ATP synthase subunit s, mitochondrial (200 aa).

Residues 1-25 (MMMFGKISRQLCSLKKIPWSCDSRY) constitute a mitochondrion transit peptide. The segment at 1-61 (MMMFGKISRQ…SEWLLRCGAK (61 aa)) is N-terminal domain. Gly-59 is a Mg(2+) binding site. 4 LRR repeats span residues 62-87 (VRYC…RYKI), 88-116 (QAID…KITL), 117-141 (CKCH…KSLL), and 142-173 (ELEI…LSDL). Thr-93 provides a ligand contact to Mg(2+).

The protein belongs to the ATP synthase subunit s family. As to quaternary structure, homotetramer. Associates with ATP synthase.

It localises to the mitochondrion. Its subcellular location is the mitochondrion inner membrane. Functionally, involved in regulation of mitochondrial membrane ATP synthase. Necessary for H(+) conduction of ATP synthase. Facilitates energy-driven catalysis of ATP synthesis by blocking a proton leak through an alternative proton exit pathway. This chain is ATP synthase subunit s, mitochondrial (Dmac2l), found in Mus musculus (Mouse).